The sequence spans 1709 residues: Acrosomal protein KIAA1210 (1709 aa).

Disordered stretches follow at residues 207-226, 239-275, 451-663, 763-973, 1211-1382, 1408-1516, 1539-1571, and 1589-1653; these read PVRE…GSKA, PERS…SKVP, PNLD…AEKT, PPRS…MAVE, LKRG…SVNA, TKKF…GRGH, ADKQ…QSDY, and FKAH…KSVG. Residues 257 to 272 are compositionally biased toward basic residues; the sequence is PQQRSHISRTLPKPRS. The segment covering 473–490 has biased composition (basic and acidic residues); that stretch reads EEEKSITKPKEINEKKLG. 2 stretches are compositionally biased toward polar residues: residues 494 to 505 and 514 to 527; these read ADSSSQKQNNKT and DQAP…SQGY. Over residues 595–608 the composition is skewed to low complexity; the sequence is EQPTTSQPETTTPQ. Basic and acidic residues predominate over residues 651-663; sequence PYHEDAASGAEKT. Residues 777–794 show a composition bias toward acidic residues; it reads EEVSSDSENIPEEGDGSE. Composition is skewed to polar residues over residues 886–941, 1288–1299, 1332–1350, 1366–1376, and 1457–1469; these read KNQQ…QSDS, FKEQLSPRQLSQ, HSSQ…SSKG, PSSSPFQQQVH, and DGNN…LSNQ. The segment covering 1502–1513 has biased composition (low complexity); sequence SVPSGPISSSVG. Residues 1542–1552 show a composition bias toward basic and acidic residues; it reads QQSRPKSESMA.

In terms of assembly, interacts with TOP2B.

The protein localises to the cytoplasmic vesicle. Its subcellular location is the secretory vesicle. It is found in the acrosome. The sequence is that of Acrosomal protein KIAA1210 from Homo sapiens (Human).